The sequence spans 880 residues: MSEKNIKGIKFGILSPDEIRKMSVTAIITPDVYDEDGTPIEGSVMDPRLGVIEPGQKCPTCGNTLGNCPGHFGHIELVRPVIHVGFVKHVYEFLKATCRRCGRVKISEDEIEKYSRIYNAIKKRWPSAARRLTEYVKKTAMKAQVCPHCGEKQFKIKLEKPYNFYEERKEGVAKLTPSDIRERLEKVPESDVEILGYDPTTSRPEWMILTVLPVPPITIRPSIMIESGIRAEDDLTHKLVDIVRINERLKESIDAGAPQLIIEDLWDLLQYHVATYFDNEIPGLPPSKHRSGRPLRTLAQRLKGKEGRFRGNLSGKRVDFSSRTVISPDPNISIDEVGVPEIIARTLTVPERITPWNIEKLRQFVINGPDKWPGANYVIRPDGRRIDLRYVKDRKELASTLAPGYVVERHLTDGDVVLFNRQPSLHRISMMAHRVRVLKGLTFRLNLLVCPPYNADFDGDEMNLHVPQSEEAIAEAKEIMLVHKNIITPRYGGPIIGAAQDYISGAYLLTVKTTLLTKEEAQQILGVADVKIDLGEPAILAPREYYTGKQVVSAFLPKDFNFHGQANVSSGPRLCKNEDCPHDSYVVIKNGILLEGVFDKKAIGNQQPESILHWLIKEYSDEYGKWLMDNLFRVFIRFVELQGFTMRLEDVSLGDDVKKEIYNEIDRAKVEVDNLIQKYKNGELEPIPGRTLEESLENYILDTLDKLRSTAGDIASKYLDPFNFAYVMARTGARGSVLNITQMAAMLGQQSVRGERIKRGYMTRTLPHFKPYDISPEARGFIYSSFRTGLKPTELFFHAAGGREGLVDTAVRTSQSGYMQRRLINALSDLRAEYDGTVRSLYGEVIQVAYGDDGVFPMYSAHGKTVDVNRIFERVVGWKT.

Zn(2+) is bound by residues Cys-58, Cys-61, Cys-68, and His-71. Residues Lys-88 and 92–95 contribute to the dsDNA site; that span reads EFLK. Zn(2+) contacts are provided by Cys-98 and Cys-101. DsDNA is bound at residue Lys-138. Residues Cys-146 and Cys-149 each contribute to the Zn(2+) site. Residues Lys-303, 305–310, Arg-323, and Gln-422 each bind dsDNA; that span reads KEGRFR. Mg(2+) is bound by residues Asp-456, Asp-458, and Asp-460. Zn(2+)-binding residues include Arg-573, Cys-575, Cys-580, and His-582. Residues 812–822 and Gln-815 each bind dsDNA; that span reads RTSQSGYMQRR.

It belongs to the RNA polymerase beta' chain family. In terms of assembly, part of the 13-subunit RNA polymerase complex. Rpo1N and Rpo5 form a cleft which docks Rpo13. Interacts with Rpo8 on the periphery of the clamp head. The cofactor is Mg(2+). It depends on Zn(2+) as a cofactor.

The protein localises to the cytoplasm. It catalyses the reaction RNA(n) + a ribonucleoside 5'-triphosphate = RNA(n+1) + diphosphate. DNA-dependent RNA polymerase (RNAP) catalyzes the transcription of DNA into RNA using the four ribonucleoside triphosphates as substrates. Forms the clamp head domain. This is DNA-directed RNA polymerase subunit Rpo1N from Saccharolobus shibatae (strain ATCC 51178 / DSM 5389 / JCM 8931 / NBRC 15437 / B12) (Sulfolobus shibatae).